Reading from the N-terminus, the 240-residue chain is 2,3,4,5-tetrahydropyridine-2,6-dicarboxylate N-acetyltransferase (240 aa).

The protein belongs to the transferase hexapeptide repeat family. DapH subfamily.

It carries out the reaction (S)-2,3,4,5-tetrahydrodipicolinate + acetyl-CoA + H2O = L-2-acetamido-6-oxoheptanedioate + CoA. It functions in the pathway amino-acid biosynthesis; L-lysine biosynthesis via DAP pathway; LL-2,6-diaminopimelate from (S)-tetrahydrodipicolinate (acetylase route): step 1/3. In terms of biological role, catalyzes the transfer of an acetyl group from acetyl-CoA to tetrahydrodipicolinate. The protein is 2,3,4,5-tetrahydropyridine-2,6-dicarboxylate N-acetyltransferase of Halalkalibacterium halodurans (strain ATCC BAA-125 / DSM 18197 / FERM 7344 / JCM 9153 / C-125) (Bacillus halodurans).